A 161-amino-acid chain; its full sequence is Zinc finger protein KNUCKLES (161 aa).

Residues 1–33 (MAEPPPSYLHFVGPAKTRSSSKRHSFSSSAHPA) form a disordered region. The C2H2-type zinc finger occupies 38–60 (FPCQYCPRKFYTSQALGGHQNAH). The tract at residues 142–161 (GGNGVMEEDEPLDLDLSLRL) is disordered. The EAR-like (transcriptional repression) motif lies at 155–159 (LDLSL).

First expressed in developing carpel primordia, and later in stamens and ovules of flower buds.

It localises to the nucleus. Its function is as follows. May function as a transcriptional repressor of cellular proliferation that regulates floral determinacy and relative size of basal pattern elements along the proximo-distal axis of the developing gynoecium. The polypeptide is Zinc finger protein KNUCKLES (KNU) (Arabidopsis thaliana (Mouse-ear cress)).